The sequence spans 257 residues: Small ribosomal subunit protein uS15m (257 aa).

A mitochondrion-targeting transit peptide spans 1 to 57 (MLRAAWRALSSVRVQAVTQAPVPALRARSSASLPSARCGLQTPSLLNAARAYAVQKP). The disordered stretch occupies residues 228–257 (KAAAAAAKKEKRERVPENPSNALPEKTKEN). Basic and acidic residues predominate over residues 234-243 (AKKEKRERVP).

This sequence belongs to the universal ribosomal protein uS15 family. As to quaternary structure, component of the mitochondrial ribosome small subunit (28S) which comprises a 12S rRNA and about 30 distinct proteins. Interacts with METTL17.

Its subcellular location is the mitochondrion matrix. This Rattus norvegicus (Rat) protein is Small ribosomal subunit protein uS15m (Mrps15).